The following is a 414-amino-acid chain: Multifunctional CCA protein (414 aa).

The ATP site is built by Gly8 and Arg11. Gly8 and Arg11 together coordinate CTP. Residues Asp21 and Asp23 each coordinate Mg(2+). Residues Arg91, Arg137, and Arg140 each coordinate ATP. CTP is bound by residues Arg91, Arg137, and Arg140. Positions Thr228 to Trp329 constitute an HD domain.

Belongs to the tRNA nucleotidyltransferase/poly(A) polymerase family. Bacterial CCA-adding enzyme type 1 subfamily. As to quaternary structure, monomer. Can also form homodimers and oligomers. Requires Mg(2+) as cofactor. The cofactor is Ni(2+).

It catalyses the reaction a tRNA precursor + 2 CTP + ATP = a tRNA with a 3' CCA end + 3 diphosphate. The catalysed reaction is a tRNA with a 3' CCA end + 2 CTP + ATP = a tRNA with a 3' CCACCA end + 3 diphosphate. Catalyzes the addition and repair of the essential 3'-terminal CCA sequence in tRNAs without using a nucleic acid template. Adds these three nucleotides in the order of C, C, and A to the tRNA nucleotide-73, using CTP and ATP as substrates and producing inorganic pyrophosphate. tRNA 3'-terminal CCA addition is required both for tRNA processing and repair. Also involved in tRNA surveillance by mediating tandem CCA addition to generate a CCACCA at the 3' terminus of unstable tRNAs. While stable tRNAs receive only 3'-terminal CCA, unstable tRNAs are marked with CCACCA and rapidly degraded. This chain is Multifunctional CCA protein, found in Serratia proteamaculans (strain 568).